A 489-amino-acid polypeptide reads, in one-letter code: Monocarboxylate transporter 2 (489 aa).

The Cytoplasmic segment spans residues 1-21 (MPSESSVKATAAPPPFPLPPD). The helical transmembrane segment at 22-42 (GGWGWVVVCASFISIGFSYAF) threads the bilayer. At 43-65 (PKAVTVFFNDIKDIFKTTSSQIA) the chain is on the extracellular side. Residues 66-86 (WISSIMLAVMYAGGPISSVLV) form a helical membrane-spanning segment. At 87–95 (NNYGSRPVV) the chain is on the cytoplasmic side. The chain crosses the membrane as a helical span at residues 96–116 (IVGGLLCCTGMILASFSSSVI). The Extracellular segment spans residues 117 to 121 (ELYLT). A helical transmembrane segment spans residues 122–142 (VGFIGGLGLAFNLQPALTIIG). The Cytoplasmic portion of the chain corresponds to 143–154 (KYFYRKRPLANG). Residues 155–175 (FAMAGSPVFLSTLAPFNQFLF) traverse the membrane as a helical segment. At 176-179 (NSYG) the chain is on the extracellular side. A helical membrane pass occupies residues 180 to 200 (WKGSFLILGAIFLHSCVAGCL). Topologically, residues 201–250 (MRPVGPSPRAAKSKSKVGSRQDSSTKRLSKVSTAEKINRFLDFGLFTHRG) are cytoplasmic. Residues 206–227 (PSPRAAKSKSKVGSRQDSSTKR) are disordered. A helical membrane pass occupies residues 251 to 271 (FLIYLSGNVVLFLGMFAPIIF). Residues 272 to 286 (LAPYAKDKGVDDYNS) lie on the Extracellular side of the membrane. The helical transmembrane segment at 287-307 (AFLLSVMAFTDMFARPSVGLI) threads the bilayer. Residues 308-316 (ANTSLIRPR) are Cytoplasmic-facing. Residues 317–337 (IQYLFSVAIMFTGICHLLCPL) form a helical membrane-spanning segment. Over 338–342 (AHSYT) the chain is Extracellular. A helical membrane pass occupies residues 343 to 363 (ALVVYVIFFGIGFGSISSLLF). The Cytoplasmic portion of the chain corresponds to 364-377 (ECLMDQVGASRFSS). Residues 378 to 398 (AVGLVTIVECCPVLFGPPLAG) traverse the membrane as a helical segment. Over 399 to 410 (KLLDITGQYKYL) the chain is Extracellular. A helical membrane pass occupies residues 411-431 (YIASGIVVLSSGIYLLICNAI). Residues 432-489 (NYRLLEKERKREKARRKKSASQASKEMEALSRSKQDDVTVKVSNTHNPPSDRDKESSI) are Cytoplasmic-facing. Residues 441-489 (KREKARRKKSASQASKEMEALSRSKQDDVTVKVSNTHNPPSDRDKESSI) form a disordered region. 2 stretches are compositionally biased toward basic and acidic residues: residues 456–470 (KEMEALSRSKQDDVT) and 480–489 (PSDRDKESSI).

It belongs to the major facilitator superfamily. Monocarboxylate porter (TC 2.A.1.13) family. Homodimer. Interacts with GRID2IP. Interacts with EMB; interaction mediates SLC16A7 targeting to the plasma membrane. Interacts with isoform 2 of BSG. As to expression, detected in brain and kidney (at protein level).

Its subcellular location is the cell membrane. The protein localises to the basolateral cell membrane. It localises to the cytoplasm. It carries out the reaction 3-methyl-2-oxobutanoate(out) + H(+)(out) = 3-methyl-2-oxobutanoate(in) + H(+)(in). The enzyme catalyses (S)-lactate(in) + H(+)(in) = (S)-lactate(out) + H(+)(out). The catalysed reaction is acetoacetate(out) + H(+)(out) = acetoacetate(in) + H(+)(in). It catalyses the reaction (R)-3-hydroxybutanoate(out) + H(+)(out) = (R)-3-hydroxybutanoate(in) + H(+)(in). It carries out the reaction 4-methyl-2-oxopentanoate(out) + H(+)(out) = 4-methyl-2-oxopentanoate(in) + H(+)(in). The enzyme catalyses pyruvate(out) + H(+)(out) = pyruvate(in) + H(+)(in). The catalysed reaction is (S)-3-hydroxybutanoate(out) + H(+)(out) = (S)-3-hydroxybutanoate(in) + H(+)(in). Transport activity exhibits steep dependence on substrate concentration. Substrate concentration sensitivity of SLC16A7 arises from the strong inter-subunit cooperativity of the SLC16A7 dimer during transport. Inhibited by AR-C155858. Its function is as follows. Proton-coupled monocarboxylate symporter. Catalyzes the rapid transport across the plasma membrane of monocarboxylates such as L-lactate, pyruvate and ketone bodies, acetoacetate, beta-hydroxybutyrate and acetate. Dimerization is functionally required and both subunits work cooperatively in transporting substrate. The sequence is that of Monocarboxylate transporter 2 (Slc16a7) from Rattus norvegicus (Rat).